Consider the following 102-residue polypeptide: Large ribosomal subunit protein bL21 (102 aa).

Belongs to the bacterial ribosomal protein bL21 family. Part of the 50S ribosomal subunit. Contacts protein L20.

This protein binds to 23S rRNA in the presence of protein L20. This chain is Large ribosomal subunit protein bL21, found in Syntrophotalea carbinolica (strain DSM 2380 / NBRC 103641 / GraBd1) (Pelobacter carbinolicus).